The primary structure comprises 338 residues: Glyceraldehyde-3-phosphate dehydrogenase, cytosolic (338 aa).

Residues 13–14 (RI), Asp-35, and Arg-82 each bind NAD(+). Residues 153 to 155 (SCT), Thr-184, 213 to 214 (TG), and Arg-236 contribute to the D-glyceraldehyde 3-phosphate site. Cys-154 serves as the catalytic Nucleophile. Position 318 (Asn-318) interacts with NAD(+).

It belongs to the glyceraldehyde-3-phosphate dehydrogenase family. In terms of assembly, homotetramer.

The protein localises to the cytoplasm. The catalysed reaction is D-glyceraldehyde 3-phosphate + phosphate + NAD(+) = (2R)-3-phospho-glyceroyl phosphate + NADH + H(+). It functions in the pathway carbohydrate degradation; glycolysis; pyruvate from D-glyceraldehyde 3-phosphate: step 1/5. Its function is as follows. Key enzyme in glycolysis that catalyzes the first step of the pathway by converting D-glyceraldehyde 3-phosphate (G3P) into 3-phospho-D-glyceroyl phosphate. Essential for the maintenance of cellular ATP levels and carbohydrate metabolism. The polypeptide is Glyceraldehyde-3-phosphate dehydrogenase, cytosolic (GAPC) (Dianthus caryophyllus (Carnation)).